The following is an 84-amino-acid chain: Large ribosomal subunit protein bL27 (84 aa).

The segment at 1–22 (MAHKKAGGSTRNGRDSESKRLG) is disordered.

This sequence belongs to the bacterial ribosomal protein bL27 family.

The protein is Large ribosomal subunit protein bL27 of Shewanella loihica (strain ATCC BAA-1088 / PV-4).